A 467-amino-acid polypeptide reads, in one-letter code: Dynactin subunit 4 (467 aa).

Ala-2 is modified (N-acetylalanine). A Glycyl lysine isopeptide (Lys-Gly) (interchain with G-Cter in SUMO2) cross-link involves residue Lys-222. Residue Thr-414 is modified to Phosphothreonine.

Belongs to the dynactin subunit 4 family. In terms of assembly, subunit of dynactin, a multiprotein complex part of a tripartite complex with dynein and a adapter, such as BICDL1, BICD2 or HOOK3. The dynactin complex is built around ACTR1A/ACTB filament and consists of an actin-related filament composed of a shoulder domain, a pointed end and a barbed end. Its length is defined by its flexible shoulder domain. The soulder is composed of 2 DCTN1 subunits, 4 DCTN2 and 2 DCTN3. The 4 DCNT2 (via N-terminus) bind the ACTR1A filament and act as molecular rulers to determine the length. The pointed end is important for binding dynein-dynactin cargo adapters. Consists of 4 subunits: ACTR10, DCNT4, DCTN5 and DCTN6. The barbed end is composed of a CAPZA1:CAPZB heterodimers, which binds ACTR1A/ACTB filament and dynactin and stabilizes dynactin. Interacts with ATP7B, but not ATP7A, in a copper-dependent manner. Interacts with ANK2; this interaction is required for localization at costameres. Interacts with N4BP2L1.

The protein resides in the cytoplasm. Its subcellular location is the cytoskeleton. It is found in the microtubule organizing center. The protein localises to the centrosome. It localises to the stress fiber. The protein resides in the cell cortex. Its subcellular location is the myofibril. It is found in the sarcomere. Its function is as follows. Part of the dynactin complex that activates the molecular motor dynein for ultra-processive transport along microtubules. Together with dynein is involved in spindle assembly and cytokinesis. The chain is Dynactin subunit 4 (DCTN4) from Sus scrofa (Pig).